Reading from the N-terminus, the 76-residue chain is Large ribosomal subunit protein bL31 (76 aa).

Belongs to the bacterial ribosomal protein bL31 family. Type A subfamily. Part of the 50S ribosomal subunit.

Its function is as follows. Binds the 23S rRNA. The sequence is that of Large ribosomal subunit protein bL31 from Methylocella silvestris (strain DSM 15510 / CIP 108128 / LMG 27833 / NCIMB 13906 / BL2).